Reading from the N-terminus, the 309-residue chain is Interferon-inducible double-stranded RNA-dependent protein kinase activator A homolog A (309 aa).

A disordered region spans residues 1 to 22; that stretch reads MSQERFPAAPKMSSEKPTSLDA. DRBM domains lie at 31–98, 123–191, and 236–304; these read TPIQ…ILRG, NPVG…KFKT, and DYVK…YLKI.

This sequence belongs to the PRKRA family. As to quaternary structure, homodimer. Interacts with dicer1 and eif2ak2/pkr. Also able to interact with dsRNA.

It is found in the cytoplasm. The protein resides in the perinuclear region. Its subcellular location is the nucleus. Its function is as follows. Activates eif2ak2/pkr in the absence of double-stranded RNA (dsRNA), leading to phosphorylation of eif2s1/efi2-alpha and inhibition of translation and induction of apoptosis. Required for siRNA production by dicer1 and for subsequent siRNA-mediated post-transcriptional gene silencing. Does not seem to be required for processing of pre-miRNA to miRNA by dicer1. The chain is Interferon-inducible double-stranded RNA-dependent protein kinase activator A homolog A (prkra-a) from Xenopus laevis (African clawed frog).